The chain runs to 292 residues: Protein sarah (292 aa).

Low complexity predominate over residues 1-51 (MSDAAKSNNNASADAPDPTTPDATGEADAANAATPTTPRGNHNNNNSANGR). The tract at residues 1–111 (MSDAAKSNNN…TEPEVDADSF (111 aa)) is disordered. Phosphoserine occurs at positions 67, 72, and 100. Positions 98-111 (VDSDTEPEVDADSF) are enriched in acidic residues. A phosphothreonine mark is found at Thr102 and Thr196. 2 positions are modified to phosphoserine: Ser215 and Ser219. Thr246 carries the phosphothreonine modification.

It belongs to the RCAN family. As to quaternary structure, interacts with Pp2B-14D, CanA-14F and CanB2. Phosphorylation at Ser-215 and Ser-219 is essential for calcineurin activation and completion of female meiosis. Sgg is required for phosphorylation of Ser-215 in activated eggs. Ser-100, Thr-102 and Ser-219 are highly phosphorylated in both ovaries and activated eggs; however, phosphorylation at Ser-100 or Thr-102 is not required for sra function in completion of female meiosis. Expressed in central nervous system of the third instar larvae, with a relatively intense signal in the brain and weak signals in the ventral ganglion. Relatively low, but ubiquitous expression level is observed in leg and wing imaginal disks, no signal is detected in the eye-antennal disks. Expressed in all neurons in the adult brain.

In terms of biological role, required for elongation of meiosis I spindle. Critical for ovulation, meiotic progression in oocytes and female courtship behavior, including their postmating changes. Regulates female meiosis by controlling calcineurin activity in the germline. Has a role in calcium signaling during egg activation; bcd mRNA polyadenylation and translation in the oocyte. This is Protein sarah (sra) from Drosophila melanogaster (Fruit fly).